The sequence spans 790 residues: Centrosomal protein of 78 kDa (790 aa).

Disordered regions lie at residues 325–345 (YQWVTSPSSKEPSKTAKQRKK), 362–385 (GLATKKPSSNGRKQGLGKDCYAPN), 428–462 (VTVTVESPSSSETDETEDSSESVQEAPQKTSIKEE), 654–732 (AKTG…LNEP), and 756–790 (KTIKSKPNLLEHSESDTLGSDFELQERVHSSAHLT). 2 positions are modified to phosphoserine: Ser330 and Ser332. The segment covering 428 to 438 (VTVTVESPSSS) has biased composition (low complexity). Positions 455 to 510 (QKTSIKEETLQEKLEECLRQLKEERVIRLKADKRVSELEHENAQLRNINFSLSEAL) form a coiled coil. Basic and acidic residues-rich tracts occupy residues 693–708 (PSRRPSAERHPRKDLL) and 721–732 (GPGDRRSLLNEP).

Belongs to the CEP78 family. Interacts with PLK4. Interacts with FAM161A. Interacts with IFT20; regulating IFT20 stability and localization. Interacts with TTC21A; regulating TTC21A stability and localization. Interacts with USP16; promoting USP16-dependent deubiquitination of tektins. Interacts with DCAF1/VPRBP; promoting localization of the EDVP complex to centrosomes. Interacts with CEP350; promoting CEP78 localization to centrosome and centriole. Expressed by photoreceptor cells in the retina.

The protein localises to the cytoplasm. It localises to the cytoskeleton. Its subcellular location is the microtubule organizing center. The protein resides in the centrosome. It is found in the centriole. The protein localises to the cilium basal body. Its function is as follows. Centriole wall protein that localizes to mature centrioles and regulates centriole and cilia biogenesis. Involved in centrosome duplication: required for efficient PLK4 centrosomal localization and PLK4-induced overduplication of centrioles. Involved in cilium biogenesis and controls cilium length. Acts as a regulator of protein stability by preventing ubiquitination of centrosomal proteins, such as CCP110 and tektins. Associates with the EDVP complex, preventing ubiquitination and degradation of CCP110. Promotes deubiquitination of tektin proteins (TEKT1, TEKT2, TEK3, TEKT4 and TEKT5) via its interaction with USP16. This chain is Centrosomal protein of 78 kDa, found in Mus musculus (Mouse).